The following is a 957-amino-acid chain: Valine--tRNA ligase (957 aa).

Residues 42–52 carry the 'HIGH' region motif; sequence PNVTGSLHMGH. The short motif at 554–558 is the 'KMSKS' region element; sequence KMSKS. K557 provides a ligand contact to ATP. The stretch at 890–956 forms a coiled coil; sequence DKDAELARLA…LEAQQETIAA (67 aa).

Belongs to the class-I aminoacyl-tRNA synthetase family. ValS type 1 subfamily. As to quaternary structure, monomer.

The protein localises to the cytoplasm. It carries out the reaction tRNA(Val) + L-valine + ATP = L-valyl-tRNA(Val) + AMP + diphosphate. Its function is as follows. Catalyzes the attachment of valine to tRNA(Val). As ValRS can inadvertently accommodate and process structurally similar amino acids such as threonine, to avoid such errors, it has a 'posttransfer' editing activity that hydrolyzes mischarged Thr-tRNA(Val) in a tRNA-dependent manner. The chain is Valine--tRNA ligase from Aliivibrio fischeri (strain ATCC 700601 / ES114) (Vibrio fischeri).